A 139-amino-acid polypeptide reads, in one-letter code: MGITALAFDFGTKSIGCAIGQSITGTAQALPAFKAQDGIPNWEAIEKCLKEWKPDVVIVGLPLNMDGTEQDLTLRARKFANRLQGRFGVNVHLQDERLTTTQARSEIFERGGFKALKKGKIDGVSACLILESWFEYAEY.

This sequence belongs to the YqgF nuclease family.

It is found in the cytoplasm. Functionally, could be a nuclease involved in processing of the 5'-end of pre-16S rRNA. The sequence is that of Putative pre-16S rRNA nuclease from Haemophilus influenzae (strain 86-028NP).